A 403-amino-acid chain; its full sequence is Alkaline protease 1 (403 aa).

Residues 1-21 (MHSFKRSLLLLGALLPAVFGA) form the signal peptide. A propeptide spanning residues 22 to 124 (PVEPRRAAEK…QIWYIDALTS (103 aa)) is cleaved from the precursor. The 85-residue stretch at 35–119 (KYIVTFKSGL…HVEEDQIWYI (85 aa)) folds into the Inhibitor I9 domain. A Peptidase S8 domain is found at 129-403 (PWGLGAISHK…NLLAYNGADE (275 aa)). Active-site charge relay system residues include D161 and H192. N-linked (GlcNAc...) asparagine glycosylation is present at N252. S348 functions as the Charge relay system in the catalytic mechanism.

This sequence belongs to the peptidase S8 family.

Its subcellular location is the secreted. The catalysed reaction is Hydrolysis of proteins with broad specificity, and of Bz-Arg-OEt &gt; Ac-Tyr-OEt. Does not hydrolyze peptide amides.. Its function is as follows. Secreted alkaline protease that allows assimilation of proteinaceous substrates. This Emericella nidulans (strain FGSC A4 / ATCC 38163 / CBS 112.46 / NRRL 194 / M139) (Aspergillus nidulans) protein is Alkaline protease 1 (alp1).